The sequence spans 447 residues: Tubulin beta-5 chain (447 aa).

GTP contacts are provided by Q11, E69, S138, G142, T143, G144, N204, and N226. E69 is a Mg(2+) binding site. Positions 421 to 447 are disordered; sequence EYQQYQDATADDEEEDYGDEEEDEVAA. Over residues 429-447 the composition is skewed to acidic residues; the sequence is TADDEEEDYGDEEEDEVAA.

The protein belongs to the tubulin family. In terms of assembly, dimer of alpha and beta chains. A typical microtubule is a hollow water-filled tube with an outer diameter of 25 nm and an inner diameter of 15 nM. Alpha-beta heterodimers associate head-to-tail to form protofilaments running lengthwise along the microtubule wall with the beta-tubulin subunit facing the microtubule plus end conferring a structural polarity. Microtubules usually have 13 protofilaments but different protofilament numbers can be found in some organisms and specialized cells. Requires Mg(2+) as cofactor. Expressed in roots, leaf sheaths, and suspension cultured cells.

It localises to the cytoplasm. It is found in the cytoskeleton. In terms of biological role, tubulin is the major constituent of microtubules, a cylinder consisting of laterally associated linear protofilaments composed of alpha- and beta-tubulin heterodimers. Microtubules grow by the addition of GTP-tubulin dimers to the microtubule end, where a stabilizing cap forms. Below the cap, tubulin dimers are in GDP-bound state, owing to GTPase activity of alpha-tubulin. The polypeptide is Tubulin beta-5 chain (TUBB5) (Oryza sativa subsp. japonica (Rice)).